The chain runs to 474 residues: BPI fold-containing family B member 1 (474 aa).

The first 21 residues, 1–21 (MAGPWIITLLCGLLGATLVQA), serve as a signal peptide directing secretion. N-linked (GlcNAc...) asparagine glycosylation is found at N153, N160, N263, and N400. Cysteines 157 and 200 form a disulfide.

It belongs to the BPI/LBP/Plunc superfamily. Plunc family. Expressed in tongue, lung, thymus, and stomach. Expressed in epithelia of palate, anterior pharynx, trachea and upper bronchi. Expressed in distal tip of papillae in the anterior third of the tongue and in serous cells of von Ebner glands in the posterior third of the tongue. Expressed in columnar epithelium of the duodenum in embryonic gut at 16.5 dpc.

Its subcellular location is the secreted. In terms of biological role, may play a role in innate immunity in mouth, nose and lungs. Binds bacterial lipopolysaccharide (LPS) and modulates the cellular responses to LPS. May be involved in formation of the left-right axis in the node of the developing embryo. This Mus musculus (Mouse) protein is BPI fold-containing family B member 1 (Bpifb1).